Here is a 157-residue protein sequence, read N- to C-terminus: Small ribosomal subunit protein uS7 (157 aa).

This sequence belongs to the universal ribosomal protein uS7 family. Part of the 30S ribosomal subunit. Contacts proteins S9 and S11.

One of the primary rRNA binding proteins, it binds directly to 16S rRNA where it nucleates assembly of the head domain of the 30S subunit. Is located at the subunit interface close to the decoding center, probably blocks exit of the E-site tRNA. This chain is Small ribosomal subunit protein uS7, found in Roseiflexus sp. (strain RS-1).